The sequence spans 537 residues: Putative cysteine ligase BshC (537 aa).

Positions 422 to 450 (IEKVEGMIEQQRRLYQDLLDEVAGNQNNI) form a coiled coil.

It belongs to the BshC family.

In terms of biological role, involved in bacillithiol (BSH) biosynthesis. May catalyze the last step of the pathway, the addition of cysteine to glucosamine malate (GlcN-Mal) to generate BSH. This Staphylococcus aureus (strain MRSA252) protein is Putative cysteine ligase BshC.